A 252-amino-acid polypeptide reads, in one-letter code: Trans-aconitate 2-methyltransferase (252 aa).

It belongs to the methyltransferase superfamily. Tam family.

Its subcellular location is the cytoplasm. The catalysed reaction is trans-aconitate + S-adenosyl-L-methionine = (E)-3-(methoxycarbonyl)pent-2-enedioate + S-adenosyl-L-homocysteine. In terms of biological role, catalyzes the S-adenosylmethionine monomethyl esterification of trans-aconitate. This Shigella flexneri serotype 5b (strain 8401) protein is Trans-aconitate 2-methyltransferase.